The primary structure comprises 198 residues: Probable GTP-binding protein EngB (198 aa).

The EngB-type G domain maps to 22 to 197 (TLPEYAFIGR…LDYIEGINNS (176 aa)). Residues 30–37 (GRSNVGKS), 57–61 (GKTQL), 75–78 (DLPG), 142–145 (TKAD), and 175–178 (ITSA) each bind GTP. Mg(2+)-binding residues include serine 37 and threonine 59.

This sequence belongs to the TRAFAC class TrmE-Era-EngA-EngB-Septin-like GTPase superfamily. EngB GTPase family. Mg(2+) serves as cofactor.

Functionally, necessary for normal cell division and for the maintenance of normal septation. This chain is Probable GTP-binding protein EngB, found in Christiangramia forsetii (strain DSM 17595 / CGMCC 1.15422 / KT0803) (Gramella forsetii).